We begin with the raw amino-acid sequence, 519 residues long: MWHWSLLCVFLLVPLANSTAPISFEANPDTKRLYDDLLSNYNRLIRPVVNNTETLTVWLGLKLSQLIEVNLKNQVMTTNLWVKQRWFDYKLRWDPEEYGGVEQLYVPSEHIWVPDIVLYNNWDGNYEVTLMTKATLKYTGEVFWEPPAIYKSSCEMNVEYFPYDEQICFMKFGSWTYNGAQVDLKHLDQIPGSNLVQVGIDLTEFYLSVEWDILEVPATKNEEYYPDTLEPFSDITFKLTMRRKTLFYTVNLIVPCVALTFLTVLVFYLPSDSGEKVTLCISILVSLTVFFLLLAEIIPPTSLAVPLLGKYLLFTMILVSLSVWTTVCVLNIHFRSPSTHNMSPLVRKLFLHFMPKLMMMRRTQYTLPDYDDSTPSNGYTNEIDVRDSISDFPSEFKDSQDGAYDNGMQNSVDSDNVIPRNLTPEVLQALRAVRFIAQHIKDADKDNEIVEDWKFVSMVLDRFFLWLFTLSCVFGTLAIICQSPSLYDTRSPIDRQLSEIPLRKNNFMLPPDIVRQVLT.

The first 18 residues, 1–18, serve as a signal peptide directing secretion; sequence MWHWSLLCVFLLVPLANS. At 19 to 244 the chain is on the extracellular side; that stretch reads TAPISFEANP…ITFKLTMRRK (226 aa). An N-linked (GlcNAc...) asparagine glycan is attached at N50. An intrachain disulfide couples C154 to C168. Transmembrane regions (helical) follow at residues 245–269, 277–295, and 311–332; these read TLFYTVNLIVPCVALTFLTVLVFYL, VTLCISILVSLTVFFLLLA, and YLLFTMILVSLSVWTTVCVLNI. The Cytoplasmic segment spans residues 333–462; it reads HFRSPSTHNM…WKFVSMVLDR (130 aa). Residues 463-481 traverse the membrane as a helical segment; that stretch reads FFLWLFTLSCVFGTLAIIC.

This sequence belongs to the ligand-gated ion channel (TC 1.A.9) family. Acetylcholine receptor (TC 1.A.9.1) subfamily. CNS in embryos.

The protein resides in the postsynaptic cell membrane. The protein localises to the cell membrane. In terms of biological role, after binding acetylcholine, the AChR responds by an extensive change in conformation that affects all subunits and leads to opening of an ion-conducting channel across the plasma membrane. In Drosophila melanogaster (Fruit fly), this protein is Acetylcholine receptor subunit beta-like 2 (nAChRbeta2).